Here is a 379-residue protein sequence, read N- to C-terminus: Putative 8-amino-7-oxononanoate synthase (379 aa).

Substrate is bound at residue arginine 18. A pyridoxal 5'-phosphate-binding site is contributed by 106–107 (GY). Histidine 130 is a binding site for substrate. Residues serine 178, 204–207 (DEAH), and 235–238 (TFGK) contribute to the pyridoxal 5'-phosphate site. Lysine 238 is subject to N6-(pyridoxal phosphate)lysine. Substrate is bound at residue threonine 351.

The protein belongs to the class-II pyridoxal-phosphate-dependent aminotransferase family. BioF subfamily. In terms of assembly, homodimer. Requires pyridoxal 5'-phosphate as cofactor.

The enzyme catalyses 6-carboxyhexanoyl-[ACP] + L-alanine + H(+) = (8S)-8-amino-7-oxononanoate + holo-[ACP] + CO2. It functions in the pathway cofactor biosynthesis; biotin biosynthesis. Its function is as follows. Catalyzes the decarboxylative condensation of pimeloyl-[acyl-carrier protein] and L-alanine to produce 8-amino-7-oxononanoate (AON), [acyl-carrier protein], and carbon dioxide. This chain is Putative 8-amino-7-oxononanoate synthase (bioF), found in Haemophilus influenzae (strain 86-028NP).